Reading from the N-terminus, the 120-residue chain is Crustacean hyperglycemic hormones 2 (120 aa).

The N-terminal stretch at 1–27 is a signal peptide; it reads MIAFHMVWSALLASLLLLLLAPSASPV. 3 cysteine pairs are disulfide-bonded: C53–C89, C69–C85, and C72–C98. V118 bears the Valine amide mark.

It belongs to the arthropod CHH/MIH/GIH/VIH hormone family.

Its subcellular location is the secreted. Hormone found in the sinus gland of isopods and decapods which controls the blood sugar level. Has a secretagogue action over the amylase released from the midgut gland. May act as a stress hormone and may be involved in the control of molting and reproduction. The protein is Crustacean hyperglycemic hormones 2 of Penaeus japonicus (Kuruma prawn).